Reading from the N-terminus, the 396-residue chain is Putative nickel insertion protein (396 aa).

Belongs to the LarC family.

This is Putative nickel insertion protein from Wolinella succinogenes (strain ATCC 29543 / DSM 1740 / CCUG 13145 / JCM 31913 / LMG 7466 / NCTC 11488 / FDC 602W) (Vibrio succinogenes).